Reading from the N-terminus, the 353-residue chain is Histidinol-phosphate aminotransferase (353 aa).

At lysine 209 the chain carries N6-(pyridoxal phosphate)lysine.

Belongs to the class-II pyridoxal-phosphate-dependent aminotransferase family. Histidinol-phosphate aminotransferase subfamily. In terms of assembly, homodimer. Requires pyridoxal 5'-phosphate as cofactor.

The catalysed reaction is L-histidinol phosphate + 2-oxoglutarate = 3-(imidazol-4-yl)-2-oxopropyl phosphate + L-glutamate. It participates in amino-acid biosynthesis; L-histidine biosynthesis; L-histidine from 5-phospho-alpha-D-ribose 1-diphosphate: step 7/9. This is Histidinol-phosphate aminotransferase from Buchnera aphidicola subsp. Cinara cedri (strain Cc).